Reading from the N-terminus, the 113-residue chain is MIGIDIVSISRIDEMINKFGEKALKRFLNESEILLTKSSQNAAGFWAAKEAFSKALGTGIGSECSFLDIEISKDQKGKPFFTTKTLNKFNIKQADLSISHDGGFAIAAVILLK.

Mg(2+)-binding residues include Asp-5 and Glu-50.

This sequence belongs to the P-Pant transferase superfamily. AcpS family. It depends on Mg(2+) as a cofactor.

It is found in the cytoplasm. It catalyses the reaction apo-[ACP] + CoA = holo-[ACP] + adenosine 3',5'-bisphosphate + H(+). Transfers the 4'-phosphopantetheine moiety from coenzyme A to a Ser of acyl-carrier-protein. The sequence is that of Holo-[acyl-carrier-protein] synthase from Nautilia profundicola (strain ATCC BAA-1463 / DSM 18972 / AmH).